Reading from the N-terminus, the 126-residue chain is Ribosome-binding factor A (126 aa).

It belongs to the RbfA family. In terms of assembly, monomer. Binds 30S ribosomal subunits, but not 50S ribosomal subunits or 70S ribosomes.

The protein localises to the cytoplasm. Functionally, one of several proteins that assist in the late maturation steps of the functional core of the 30S ribosomal subunit. Associates with free 30S ribosomal subunits (but not with 30S subunits that are part of 70S ribosomes or polysomes). Required for efficient processing of 16S rRNA. May interact with the 5'-terminal helix region of 16S rRNA. In Halorhodospira halophila (strain DSM 244 / SL1) (Ectothiorhodospira halophila (strain DSM 244 / SL1)), this protein is Ribosome-binding factor A.